Reading from the N-terminus, the 317-residue chain is Apolipoprotein E (317 aa).

A signal peptide spans 1–18 (MKALWVALVVTLLAGCRA). 8 consecutive repeat copies span residues 79 to 100 (ALME…EQLS), 101 to 122 (PVAQ…ARLG), 123 to 144 (TDME…AMLG), 145 to 166 (QTTD…KRLL), 167 to 188 (RDAE…EGAE), 189 to 210 (RSVS…LGTA), 211 to 232 (TTST…QKLR), and 233 to 254 (GRLE…EQLE). The 8 X 22 AA approximate tandem repeats stretch occupies residues 79-254 (ALMEETMKEV…RLDKMREQLE (176 aa)). A Methionine sulfoxide modification is found at Met-142. The segment at 157 to 167 (HLRKLRKRLLR) is LDL and other lipoprotein receptors binding. 161–164 (LRKR) is a binding site for heparin. The segment at 209–289 (TATTSTLGSQ…GWFQPLVEDL (81 aa)) is lipid-binding and lipoprotein association. An O-linked (GalNAc...) threonine glycan is attached at Thr-211. 228-235 (GQKLRGRL) contributes to the heparin binding site. The tract at residues 265-317 (SQMRLQAETFQARLKGWFQPLVEDLQRQWAGLVEKVQQLAVGTTPTPAASKNQ) is homooligomerization. The segment at 277–289 (RLKGWFQPLVEDL) is specificity for association with VLDL. O-linked (GalNAc...) threonine glycosylation is present at Thr-310.

It belongs to the apolipoprotein A1/A4/E family. As to quaternary structure, homotetramer. May interact with ABCA1; functionally associated with ABCA1 in the biogenesis of HDLs. May interact with APP/A4 amyloid-beta peptide; the interaction is extremely stable in vitro but its physiological significance is unclear. May interact with MAPT. May interact with MAP2. In the cerebrospinal fluid, interacts with secreted SORL1. Interacts with PMEL; this allows the loading of PMEL luminal fragment on ILVs to induce fibril nucleation. In terms of processing, APOE exists as multiple glycosylated and sialylated glycoforms within cells and in plasma. The extent of glycosylation and sialylation are tissue and context specific. Post-translationally, glycated in plasma VLDL. Phosphorylated by FAM20C in the extracellular medium.

Its subcellular location is the secreted. The protein localises to the extracellular space. It localises to the extracellular matrix. The protein resides in the extracellular vesicle. It is found in the endosome. Its subcellular location is the multivesicular body. In terms of biological role, APOE is an apolipoprotein, a protein associating with lipid particles, that mainly functions in lipoprotein-mediated lipid transport between organs via the plasma and interstitial fluids. APOE is a core component of plasma lipoproteins and is involved in their production, conversion and clearance. Apolipoproteins are amphipathic molecules that interact both with lipids of the lipoprotein particle core and the aqueous environment of the plasma. As such, APOE associates with chylomicrons, chylomicron remnants, very low density lipoproteins (VLDL) and intermediate density lipoproteins (IDL) but shows a preferential binding to high-density lipoproteins (HDL). It also binds a wide range of cellular receptors including the LDL receptor/LDLR and the very low-density lipoprotein receptor/VLDLR that mediate the cellular uptake of the APOE-containing lipoprotein particles. Finally, APOE also has a heparin-binding activity and binds heparan-sulfate proteoglycans on the surface of cells, a property that supports the capture and the receptor-mediated uptake of APOE-containing lipoproteins by cells. In Camelus dromedarius (Dromedary), this protein is Apolipoprotein E (APOE).